We begin with the raw amino-acid sequence, 711 residues long: DNA ligase (711 aa).

The interval 1–21 (MNATHRGAQADASAPAGGLPP) is disordered. Positions 10–21 (ADASAPAGGLPP) are enriched in low complexity. Residues 52-56 (DAEYD), 101-102 (SL), and Glu-146 contribute to the NAD(+) site. The active-site N6-AMP-lysine intermediate is the Lys-148. NAD(+) is bound by residues Arg-169, Glu-205, Lys-322, and Lys-346. Cys-440, Cys-443, Cys-458, and Cys-464 together coordinate Zn(2+). Residues 623 to 711 (RAPAPLAGKT…VGAGQPGEQS (89 aa)) form the BRCT domain.

This sequence belongs to the NAD-dependent DNA ligase family. LigA subfamily. Mg(2+) serves as cofactor. Requires Mn(2+) as cofactor.

The catalysed reaction is NAD(+) + (deoxyribonucleotide)n-3'-hydroxyl + 5'-phospho-(deoxyribonucleotide)m = (deoxyribonucleotide)n+m + AMP + beta-nicotinamide D-nucleotide.. Its function is as follows. DNA ligase that catalyzes the formation of phosphodiester linkages between 5'-phosphoryl and 3'-hydroxyl groups in double-stranded DNA using NAD as a coenzyme and as the energy source for the reaction. It is essential for DNA replication and repair of damaged DNA. The polypeptide is DNA ligase (Cupriavidus pinatubonensis (strain JMP 134 / LMG 1197) (Cupriavidus necator (strain JMP 134))).